The chain runs to 382 residues: Acetylserotonin O-methyltransferase (382 aa).

S-adenosyl-L-homocysteine contacts are provided by Gly218, Asp241, Asp261, Met262, and Lys275. His279 serves as the catalytic Proton acceptor. Catalysis depends on residues Glu308 and Glu347.

It belongs to the class I-like SAM-binding methyltransferase superfamily. Cation-independent O-methyltransferase family.

The protein resides in the cytoplasm. It carries out the reaction N-acetylserotonin + S-adenosyl-L-methionine = melatonin + S-adenosyl-L-homocysteine + H(+). Its pathway is aromatic compound metabolism; melatonin biosynthesis; melatonin from serotonin: step 1/2. Functionally, methyltransferase which catalyzes the transfer of a methyl group onto N-acetylserotonin, producing melatonin (N-acetyl-5-methoxytryptamine). Does not seem to possess caffeate O-methyltransferase activity. Implicated in melatonin-dependent circadian dynamics of stomatal aperture to minimize night water loss and promote drought tolerance. Prevents seed germination by promoting melatonin biosynthesis. Promotes melatonin-triggered defense responses to the necrotrophic fungus Botrytis cinerea. (Microbial infection) Promotes melatonin-triggered defense responses to the necrotrophic fungus Botrytis cinerea. This chain is Acetylserotonin O-methyltransferase, found in Arabidopsis thaliana (Mouse-ear cress).